The chain runs to 158 residues: Cytochrome c-type biogenesis protein CcmE (158 aa).

Residues 1–8 lie on the Cytoplasmic side of the membrane; the sequence is MMRHRNRR. A helical; Signal-anchor for type II membrane protein membrane pass occupies residues 9-29; that stretch reads LATIAASAIVLVVAVGLGLMA. The Periplasmic portion of the chain corresponds to 30-158; that stretch reads LRSAVVFFYS…PSAAGDGDSR (129 aa). 2 residues coordinate heme: histidine 123 and tyrosine 127. The segment at 139-158 is disordered; sequence AGVWQGEGETPSAAGDGDSR.

Belongs to the CcmE/CycJ family.

The protein resides in the cell inner membrane. Heme chaperone required for the biogenesis of c-type cytochromes. Transiently binds heme delivered by CcmC and transfers the heme to apo-cytochromes in a process facilitated by CcmF and CcmH. The sequence is that of Cytochrome c-type biogenesis protein CcmE from Maricaulis maris (strain MCS10) (Caulobacter maris).